The sequence spans 2628 residues: Hemagglutinin A (2628 aa).

The signal sequence occupies residues 1–24; the sequence is MRKLNSLFSLAVLLSLLCWGQTAA. 5 peptidase C25-like regions span residues 25–539, 540–995, 996–1451, 1452–1907, and 2074–2628; these read AQGG…TPPP, GGTS…TPPP, and IDAD…LAVK. Disordered regions lie at residues 493 to 512, 520 to 546, 944 to 1002, 1400 to 1458, 1856 to 1881, 1890 to 1909, and 2336 to 2358; these read WDAP…LSES, SWKT…SFAG, KWDA…SFAG, KWDA…SESF, KTID…PPGG, and SSWK…PPGG. Residues 496–508 show a composition bias toward low complexity; sequence PNGTPNPNPGTTT.

The protein belongs to the peptidase C25 family.

Agglutinates erythrocytes. In Porphyromonas gingivalis (Bacteroides gingivalis), this protein is Hemagglutinin A (hagA).